The following is a 134-amino-acid chain: Transcription antitermination protein NusB (134 aa).

It belongs to the NusB family.

In terms of biological role, involved in transcription antitermination. Required for transcription of ribosomal RNA (rRNA) genes. Binds specifically to the boxA antiterminator sequence of the ribosomal RNA (rrn) operons. In Shewanella oneidensis (strain ATCC 700550 / JCM 31522 / CIP 106686 / LMG 19005 / NCIMB 14063 / MR-1), this protein is Transcription antitermination protein NusB.